Reading from the N-terminus, the 179-residue chain is Protein GrpE (179 aa).

The segment at methionine 1–arginine 22 is disordered. Residues glutamate 11–arginine 22 are compositionally biased toward basic and acidic residues.

This sequence belongs to the GrpE family. As to quaternary structure, homodimer.

It localises to the cytoplasm. Its function is as follows. Participates actively in the response to hyperosmotic and heat shock by preventing the aggregation of stress-denatured proteins, in association with DnaK and GrpE. It is the nucleotide exchange factor for DnaK and may function as a thermosensor. Unfolded proteins bind initially to DnaJ; upon interaction with the DnaJ-bound protein, DnaK hydrolyzes its bound ATP, resulting in the formation of a stable complex. GrpE releases ADP from DnaK; ATP binding to DnaK triggers the release of the substrate protein, thus completing the reaction cycle. Several rounds of ATP-dependent interactions between DnaJ, DnaK and GrpE are required for fully efficient folding. This chain is Protein GrpE, found in Rickettsia canadensis (strain McKiel).